We begin with the raw amino-acid sequence, 229 residues long: PKHD-type hydroxylase BBta_3541 (229 aa).

The 103-residue stretch at 78 to 180 folds into the Fe2OG dioxygenase domain; the sequence is QIFPPLFNRY…RVASFFWMQS (103 aa). Fe cation is bound by residues histidine 98, aspartate 100, and histidine 161. A 2-oxoglutarate-binding site is contributed by arginine 171.

It depends on Fe(2+) as a cofactor. The cofactor is L-ascorbate.

The sequence is that of PKHD-type hydroxylase BBta_3541 from Bradyrhizobium sp. (strain BTAi1 / ATCC BAA-1182).